Consider the following 535-residue polypeptide: 5,6-dihydroxyindole-2-carboxylic acid oxidase (535 aa).

A signal peptide spans 1–23 (MQLPMLLLVSLPLLLNMFKPAEA). Residues 24 to 478 (QFPRQCATIE…GPLRVTEMIT (455 aa)) are Lumenal, melanosome-facing. Disulfide bonds link Cys29-Cys40, Cys41-Cys64, Cys55-Cys98, Cys100-Cys109, and Cys112-Cys121. N-linked (GlcNAc...) asparagine glycosylation is found at Asn95 and Asn103. Asn180 is a glycosylation site (N-linked (GlcNAc...) asparagine). Positions 191, 214, and 223 each coordinate Zn(2+). 2 cysteine pairs are disulfide-bonded: Cys257/Cys260 and Cys289/Cys302. 2 N-linked (GlcNAc...) asparagine glycosylation sites follow: Asn303 and Asn349. 2 residues coordinate Zn(2+): His376 and His380. A glycan (N-linked (GlcNAc...) asparagine) is linked at Asn384. His403 contributes to the Zn(2+) binding site. The helical transmembrane segment at 479-499 (IAIVTALVLVAIIFAAAACIV) threads the bilayer. Over 500–535 (RAKKNRDELHQPLLTDQYQHYSDDYDGIATPSQSVV) the chain is Cytoplasmic.

Belongs to the tyrosinase family. As to quaternary structure, tyrosinase, TYRP1 and TYRP2 may form a multienzyme complex. The cofactor is Cu(2+). Zn(2+) is required as a cofactor.

The protein localises to the melanosome membrane. It catalyses the reaction 2 5,6-dihydroxyindole-2-carboxylate + O2 = 2 indole-5,6-quinone-2-carboxylate + 2 H2O. Its pathway is pigment biosynthesis; melanin biosynthesis. Plays a role in melanin biosynthesis. Catalyzes the oxidation of 5,6-dihydroxyindole-2-carboxylic acid (DHICA) into indole-5,6-quinone-2-carboxylic acid. May regulate or influence the type of melanin synthesized. Also to a lower extent, capable of hydroxylating tyrosine and producing melanin. In Gallus gallus (Chicken), this protein is 5,6-dihydroxyindole-2-carboxylic acid oxidase (TYRP1).